Here is a 400-residue protein sequence, read N- to C-terminus: Glutamyl-tRNA reductase (400 aa).

Substrate contacts are provided by residues 45-48 (TCNR), S103, 108-110 (EDQ), and Q114. The active-site Nucleophile is the C46. Position 179–184 (179–184 (GYGEIG)) interacts with NADP(+).

This sequence belongs to the glutamyl-tRNA reductase family. In terms of assembly, homodimer.

It catalyses the reaction (S)-4-amino-5-oxopentanoate + tRNA(Glu) + NADP(+) = L-glutamyl-tRNA(Glu) + NADPH + H(+). It participates in porphyrin-containing compound metabolism; protoporphyrin-IX biosynthesis; 5-aminolevulinate from L-glutamyl-tRNA(Glu): step 1/2. Catalyzes the NADPH-dependent reduction of glutamyl-tRNA(Glu) to glutamate 1-semialdehyde (GSA). The protein is Glutamyl-tRNA reductase of Clostridium perfringens (strain 13 / Type A).